The chain runs to 146 residues: Leptin (146 aa).

An intrachain disulfide couples Cys96 to Cys146.

Belongs to the leptin family.

The protein resides in the secreted. Key player in the regulation of energy balance and body weight control. Once released into the circulation, has central and peripheral effects by binding LEPR, found in many tissues, which results in the activation of several major signaling pathways. In the hypothalamus, acts as an appetite-regulating factor that induces a decrease in food intake and an increase in energy consumption by inducing anorexinogenic factors and suppressing orexigenic neuropeptides, also regulates bone mass and secretion of hypothalamo-pituitary-adrenal hormones. In the periphery, increases basal metabolism, influences reproductive function, regulates pancreatic beta-cell function and insulin secretion, is pro-angiogenic for endothelial cell and affects innate and adaptive immunity. In the arcuate nucleus of the hypothalamus, activates by depolarization POMC neurons inducing FOS and SOCS3 expression to release anorexigenic peptides and inhibits by hyperpolarization NPY neurons inducing SOCS3 with a consequent reduction on release of orexigenic peptides. In addition to its known satiety inducing effect, has a modulatory role in nutrient absorption. In the intestine, reduces glucose absorption by enterocytes by activating PKC and leading to a sequential activation of p38, PI3K and ERK signaling pathways which exerts an inhibitory effect on glucose absorption. Acts as a growth factor on certain tissues, through the activation of different signaling pathways increases expression of genes involved in cell cycle regulation such as CCND1, via JAK2-STAT3 pathway, or VEGFA, via MAPK1/3 and PI3K-AKT1 pathways. May also play an apoptotic role via JAK2-STAT3 pathway and up-regulation of BIRC5 expression. Pro-angiogenic, has mitogenic activity on vascular endothelial cells and plays a role in matrix remodeling by regulating the expression of matrix metalloproteinases (MMPs) and tissue inhibitors of metalloproteinases (TIMPs). In innate immunity, modulates the activity and function of neutrophils by increasing chemotaxis and the secretion of oxygen radicals. Increases phagocytosis by macrophages and enhances secretion of pro-inflammatory mediators. Increases cytotoxic ability of NK cells. Plays a pro-inflammatory role, in synergy with IL1B, by inducing NOS2 which promotes the production of IL6, IL8 and Prostaglandin E2, through a signaling pathway that involves JAK2, PI3K, MAP2K1/MEK1 and MAPK14/p38. In adaptive immunity, promotes the switch of memory T-cells towards T helper-1 cell immune responses. Increases CD4(+)CD25(-) T-cell proliferation and reduces autophagy during TCR (T-cell receptor) stimulation, through MTOR signaling pathway activation and BCL2 up-regulation. This Ovis aries (Sheep) protein is Leptin (LEP).